A 318-amino-acid polypeptide reads, in one-letter code: Pyrimidine-specific ribonucleoside hydrolase RihA (318 aa).

Residue H240 is part of the active site.

This sequence belongs to the IUNH family. RihA subfamily.

In terms of biological role, hydrolyzes cytidine or uridine to ribose and cytosine or uracil, respectively. The protein is Pyrimidine-specific ribonucleoside hydrolase RihA of Shewanella baltica (strain OS155 / ATCC BAA-1091).